Reading from the N-terminus, the 81-residue chain is MSFNPELATKTLEAEGLRCPEPVMMVRKTIRTMQDGEVLLVKADDPSTTRDIPSFCRFMDHQLIAAQTDELPYQYLIKKGL.

The active-site Cysteine persulfide intermediate is Cys19.

This sequence belongs to the sulfur carrier protein TusA family.

It localises to the cytoplasm. Sulfur carrier protein which probably makes part of a sulfur-relay system. The polypeptide is Sulfur carrier protein TusA (Vibrio vulnificus (strain CMCP6)).